We begin with the raw amino-acid sequence, 246 residues long: 1-(5-phosphoribosyl)-5-[(5-phosphoribosylamino)methylideneamino] imidazole-4-carboxamide isomerase (246 aa).

Residue aspartate 8 is the Proton acceptor of the active site. The active-site Proton donor is the aspartate 130.

The protein belongs to the HisA/HisF family.

The protein localises to the cytoplasm. It carries out the reaction 1-(5-phospho-beta-D-ribosyl)-5-[(5-phospho-beta-D-ribosylamino)methylideneamino]imidazole-4-carboxamide = 5-[(5-phospho-1-deoxy-D-ribulos-1-ylimino)methylamino]-1-(5-phospho-beta-D-ribosyl)imidazole-4-carboxamide. It participates in amino-acid biosynthesis; L-histidine biosynthesis; L-histidine from 5-phospho-alpha-D-ribose 1-diphosphate: step 4/9. The chain is 1-(5-phosphoribosyl)-5-[(5-phosphoribosylamino)methylideneamino] imidazole-4-carboxamide isomerase from Hydrogenovibrio crunogenus (strain DSM 25203 / XCL-2) (Thiomicrospira crunogena).